The chain runs to 320 residues: Fructose-1,6-bisphosphatase class 1 (320 aa).

Mg(2+) contacts are provided by glutamate 93, aspartate 114, leucine 116, and aspartate 117. Substrate-binding positions include 117–120 (DGSS), tyrosine 225, and lysine 256. Residue glutamate 262 coordinates Mg(2+).

Belongs to the FBPase class 1 family. As to quaternary structure, homotetramer. Requires Mg(2+) as cofactor.

It localises to the cytoplasm. The enzyme catalyses beta-D-fructose 1,6-bisphosphate + H2O = beta-D-fructose 6-phosphate + phosphate. The protein operates within carbohydrate biosynthesis; gluconeogenesis. The sequence is that of Fructose-1,6-bisphosphatase class 1 from Syntrophotalea carbinolica (strain DSM 2380 / NBRC 103641 / GraBd1) (Pelobacter carbinolicus).